Reading from the N-terminus, the 209-residue chain is Uracil phosphoribosyltransferase (209 aa).

Residues Arg79, Arg104, and 131–139 (DPMLATGGS) contribute to the 5-phospho-alpha-D-ribose 1-diphosphate site. Residues Ile194 and 199–201 (GDA) contribute to the uracil site. Position 200 (Asp200) interacts with 5-phospho-alpha-D-ribose 1-diphosphate.

Belongs to the UPRTase family. The cofactor is Mg(2+).

The catalysed reaction is UMP + diphosphate = 5-phospho-alpha-D-ribose 1-diphosphate + uracil. It functions in the pathway pyrimidine metabolism; UMP biosynthesis via salvage pathway; UMP from uracil: step 1/1. With respect to regulation, allosterically activated by GTP. Functionally, catalyzes the conversion of uracil and 5-phospho-alpha-D-ribose 1-diphosphate (PRPP) to UMP and diphosphate. This Finegoldia magna (strain ATCC 29328 / DSM 20472 / WAL 2508) (Peptostreptococcus magnus) protein is Uracil phosphoribosyltransferase.